Consider the following 134-residue polypeptide: Large ribosomal subunit protein bL19 (134 aa).

A disordered region spans residues 110–134 (ARLHQEEGPSSAAPASTPPAAAPQA). The segment covering 125-134 (STPPAAAPQA) has biased composition (pro residues).

This sequence belongs to the bacterial ribosomal protein bL19 family.

Its function is as follows. This protein is located at the 30S-50S ribosomal subunit interface and may play a role in the structure and function of the aminoacyl-tRNA binding site. This chain is Large ribosomal subunit protein bL19, found in Anaeromyxobacter sp. (strain Fw109-5).